A 240-amino-acid chain; its full sequence is Allene oxide cyclase, chloroplastic (240 aa).

A chloroplast-targeting transit peptide spans 1-49; sequence MAAAAPSRVSVRAAAPGQTGGFAKIRPQVVVAAAARSAGVSGRRARSVR.

This sequence belongs to the allene oxide cyclase family.

The protein localises to the plastid. The protein resides in the chloroplast. It catalyses the reaction (9Z,13S,15Z)-12,13-epoxyoctadeca-9,11,15-trienoate = (9S,13S,15Z)-12-oxophyto-10,15-dienoate. It functions in the pathway lipid metabolism; polyunsaturated fatty acid biosynthesis. Its function is as follows. Involved in the production of 12-oxo-phytodienoic acid (OPDA), a precursor of jasmonic acid (JA). Required for the production of JA in response to wounding. Necessary for flower and coleoptile development regulation by light, including blue (BL), red (RL) and far red (FR) lights. Involved in the auxin-mediated signaling pathway leading to growth stimulation. Essential for photodestruction of phyA upon activation by RL and FR. Implicated in responses to salt stress (NaCl). In terms of biological role, confers resistance to incompatible strains of the blast fungus Magnaporthe grisea, jasmonic acid (JA) thus playing a significant role in the resistance to fungal infection. Implicated in riboflavin-induced resistance to the sheath blight Rhizoctonia solani. Required for Pseudomonas fluorescens-mediated JA-dependent induced systemic resistance (ISR). Confers some resistance, independently of the JA pathway but probably via OPDA accumulation, to brown planthopper (BPH, Nilaparvata lugens), a destructive, monophagous, piercing-sucking insect, mainly by reducing its feeding activity and survival rate. Triggers resistance to the chewing insect striped stem borer (SSB) Chilo suppressalis, to the root hemiparasite witchweed Striga hermonthica, and to the root feeder insect rice water weevil Lissorhoptrus oryzophilus, in a JA-dependent manner, by attenuating both the growth mass and growth rate of caterpillars. This is Allene oxide cyclase, chloroplastic from Oryza sativa subsp. indica (Rice).